The following is a 312-amino-acid chain: Protoheme IX farnesyltransferase (312 aa).

A run of 8 helical transmembrane segments spans residues 31-51 (VMSLVVFTALVGLLMAPGSFH), 52-72 (PVLAITAIICIAVGGGAAGAL), 119-139 (ILVNWIAAGLLAFTIFFYVVI), 152-172 (IVIGGAAGALPPVVAWASVTG), 179-199 (ILLFLIIFFWTPPHFWALALF), 225-245 (ILLYTVALVAVAAAPWPLGYF), 247-267 (VIYGVASLALGGWMLVLAVRV), and 288-308 (ILYLFALFAILLVEVVAAAVL).

This sequence belongs to the UbiA prenyltransferase family. Protoheme IX farnesyltransferase subfamily.

It localises to the cell inner membrane. The catalysed reaction is heme b + (2E,6E)-farnesyl diphosphate + H2O = Fe(II)-heme o + diphosphate. Its pathway is porphyrin-containing compound metabolism; heme O biosynthesis; heme O from protoheme: step 1/1. Functionally, converts heme B (protoheme IX) to heme O by substitution of the vinyl group on carbon 2 of heme B porphyrin ring with a hydroxyethyl farnesyl side group. This chain is Protoheme IX farnesyltransferase, found in Rhodopseudomonas palustris (strain ATCC BAA-98 / CGA009).